A 246-amino-acid polypeptide reads, in one-letter code: Probable transcriptional regulatory protein Pden_1905 (246 aa).

The interval 1–21 (MAGHSKWANIQHRKGKQDKLR) is disordered.

The protein belongs to the TACO1 family.

The protein resides in the cytoplasm. This chain is Probable transcriptional regulatory protein Pden_1905, found in Paracoccus denitrificans (strain Pd 1222).